The sequence spans 342 residues: Prostasin (342 aa).

The N-terminal stretch at 1-29 is a signal peptide; sequence MAPRVGLGLGQLEAVTILLLLGLLQSGIR. Positions 30 to 32 are cleaved as a propeptide — activation peptide; the sequence is ADG. Intrachain disulfides connect Cys37–Cys154 and Cys70–Cys86. Residues 45-286 enclose the Peptidase S1 domain; the sequence is ITGGGSAKPG…YASWIHHHVA (242 aa). His85 functions as the Charge relay system in the catalytic mechanism. An N-linked (GlcNAc...) asparagine glycan is attached at Asn110. The active-site Charge relay system is Asp134. The N-linked (GlcNAc...) asparagine glycan is linked to Asn159. 3 disulfides stabilise this stretch: Cys168–Cys244, Cys201–Cys223, and Cys234–Cys262. Ser238 functions as the Charge relay system in the catalytic mechanism. Residues 320 to 340 form a helical membrane-spanning segment; that stretch reads LLRPVLFLPLGLTLGLLSLWL. Positions 323–342 are excised as a propeptide; the sequence is PVLFLPLGLTLGLLSLWLEH.

Belongs to the peptidase S1 family. In terms of assembly, heterodimer of two chains, light and heavy, held by a disulfide bond.

The protein localises to the cell membrane. It localises to the secreted. It is found in the extracellular space. Its function is as follows. Possesses a trypsin-like cleavage specificity with a preference for poly-basic substrates. Stimulates epithelial sodium channel (ENaC) activity through activating cleavage of the gamma subunits (SCNN1G). The chain is Prostasin (Prss8) from Mus musculus (Mouse).